A 59-amino-acid polypeptide reads, in one-letter code: Prokaryotic ubiquitin-like protein UBact (59 aa).

A disordered region spans residues methionine 1–glutamine 59. A Deamidated glutamine modification is found at glutamine 59. An Isoglutamyl lysine isopeptide (Gln-Lys) (interchain with K-? in acceptor proteins) cross-link involves residue glutamine 59.

The protein belongs to the ubiquitin-like protein UBact family. May be modified by deamidation of its C-terminal glutamine to glutamate by the adjacently encoded deamidase. This could be a prerequisite to the subsequent conjugation, as shown in the other prokaryotic ubiquitin-like protein Pup.

In terms of biological role, may function as a protein modifier covalently attached to lysine residues of substrate proteins. This may serve to target the modified proteins for degradation by proteasomes. The chain is Prokaryotic ubiquitin-like protein UBact from Nitrospina gracilis (strain 3/211).